Reading from the N-terminus, the 452-residue chain is Bifunctional protein GlmU (452 aa).

The pyrophosphorylase stretch occupies residues 1–225; it reads MEVVILAAGQ…VSETLGVNSK (225 aa). Residues 6 to 9, lysine 20, glutamine 71, 76 to 77, 98 to 100, glycine 135, glutamate 150, asparagine 165, and asparagine 223 contribute to the UDP-N-acetyl-alpha-D-glucosamine site; these read LAAG, GT, and YGD. Aspartate 100 contacts Mg(2+). Mg(2+) is bound at residue asparagine 223. Residues 226 to 246 are linker; the sequence is PQLAELERIHQRNIAQRLMED. An N-acetyltransferase region spans residues 247–452; the sequence is GVTLIDPARI…AGWKRPVKQR (206 aa). The UDP-N-acetyl-alpha-D-glucosamine site is built by arginine 329 and lysine 347. The active-site Proton acceptor is the histidine 359. Positions 362 and 373 each coordinate UDP-N-acetyl-alpha-D-glucosamine. Acetyl-CoA contacts are provided by residues alanine 376, 382–383, serine 401, alanine 419, and arginine 436; that span reads NY.

In the N-terminal section; belongs to the N-acetylglucosamine-1-phosphate uridyltransferase family. The protein in the C-terminal section; belongs to the transferase hexapeptide repeat family. In terms of assembly, homotrimer. Mg(2+) is required as a cofactor.

Its subcellular location is the cytoplasm. The enzyme catalyses alpha-D-glucosamine 1-phosphate + acetyl-CoA = N-acetyl-alpha-D-glucosamine 1-phosphate + CoA + H(+). It catalyses the reaction N-acetyl-alpha-D-glucosamine 1-phosphate + UTP + H(+) = UDP-N-acetyl-alpha-D-glucosamine + diphosphate. The protein operates within nucleotide-sugar biosynthesis; UDP-N-acetyl-alpha-D-glucosamine biosynthesis; N-acetyl-alpha-D-glucosamine 1-phosphate from alpha-D-glucosamine 6-phosphate (route II): step 2/2. It participates in nucleotide-sugar biosynthesis; UDP-N-acetyl-alpha-D-glucosamine biosynthesis; UDP-N-acetyl-alpha-D-glucosamine from N-acetyl-alpha-D-glucosamine 1-phosphate: step 1/1. Its pathway is bacterial outer membrane biogenesis; LPS lipid A biosynthesis. Catalyzes the last two sequential reactions in the de novo biosynthetic pathway for UDP-N-acetylglucosamine (UDP-GlcNAc). The C-terminal domain catalyzes the transfer of acetyl group from acetyl coenzyme A to glucosamine-1-phosphate (GlcN-1-P) to produce N-acetylglucosamine-1-phosphate (GlcNAc-1-P), which is converted into UDP-GlcNAc by the transfer of uridine 5-monophosphate (from uridine 5-triphosphate), a reaction catalyzed by the N-terminal domain. This is Bifunctional protein GlmU from Azoarcus sp. (strain BH72).